A 351-amino-acid polypeptide reads, in one-letter code: Methionine import ATP-binding protein MetN (351 aa).

The region spanning 2 to 247 is the ABC transporter domain; that stretch reads ITTSGLTKVY…PGSELAAALF (246 aa). 38 to 45 lines the ATP pocket; that stretch reads GQSGAGKS.

It belongs to the ABC transporter superfamily. Methionine importer (TC 3.A.1.24) family. In terms of assembly, the complex is composed of two ATP-binding proteins (MetN), two transmembrane proteins (MetI) and a solute-binding protein (MetQ).

It localises to the cell membrane. It carries out the reaction L-methionine(out) + ATP + H2O = L-methionine(in) + ADP + phosphate + H(+). The catalysed reaction is D-methionine(out) + ATP + H2O = D-methionine(in) + ADP + phosphate + H(+). Functionally, part of the ABC transporter complex MetNIQ involved in methionine import. Responsible for energy coupling to the transport system. This chain is Methionine import ATP-binding protein MetN, found in Streptomyces coelicolor (strain ATCC BAA-471 / A3(2) / M145).